The primary structure comprises 333 residues: Cysteine protease (333 aa).

Residues 1-18 (MKFLLVAALCALVAIGSC) form the signal peptide. Residues 19 to 108 (KPTREEIKTF…MEAAKEPLIN (90 aa)) constitute a propeptide, activation peptide. N-linked (GlcNAc...) asparagine glycosylation occurs at Asn-93. Intrachain disulfides connect Cys-134-Cys-182 and Cys-168-Cys-214. Cys-137 is a catalytic residue. Catalysis depends on residues His-281 and Asn-301.

The protein belongs to the peptidase C1 family. In terms of assembly, homodimer.

Its function is as follows. Cysteine protease. The sequence is that of Cysteine protease from Blomia tropicalis (Mite).